We begin with the raw amino-acid sequence, 222 residues long: Probable transaldolase (222 aa).

The Schiff-base intermediate with substrate role is filled by lysine 91.

The protein belongs to the transaldolase family. Type 3B subfamily.

The protein localises to the cytoplasm. It catalyses the reaction D-sedoheptulose 7-phosphate + D-glyceraldehyde 3-phosphate = D-erythrose 4-phosphate + beta-D-fructose 6-phosphate. Its pathway is carbohydrate degradation; pentose phosphate pathway; D-glyceraldehyde 3-phosphate and beta-D-fructose 6-phosphate from D-ribose 5-phosphate and D-xylulose 5-phosphate (non-oxidative stage): step 2/3. In terms of biological role, transaldolase is important for the balance of metabolites in the pentose-phosphate pathway. This Chlorobaculum tepidum (strain ATCC 49652 / DSM 12025 / NBRC 103806 / TLS) (Chlorobium tepidum) protein is Probable transaldolase.